A 325-amino-acid chain; its full sequence is Flotillin-like protein FloA (325 aa).

Transmembrane regions (helical) follow at residues 4–24 (LGIVFLAAVVLLFVFLFFSFI) and 26–46 (VGLWISAWAAGVRVPLLTLVA).

It belongs to the flotillin-like FloA family. In terms of assembly, homooligomerizes.

The protein localises to the cell membrane. It is found in the membrane raft. In terms of biological role, found in functional membrane microdomains (FMM) that may be equivalent to eukaryotic membrane rafts. FMMs are highly dynamic and increase in number as cells age. Flotillins are thought to be important factors in membrane fluidity. The protein is Flotillin-like protein FloA of Thermus thermophilus (strain ATCC BAA-163 / DSM 7039 / HB27).